The following is a 202-amino-acid chain: Ribonuclease HII (202 aa).

The region spanning 11–200 (GLIAGVDEVG…VRKAIEEFNR (190 aa)) is the RNase H type-2 domain. A divalent metal cation contacts are provided by aspartate 17, glutamate 18, and aspartate 109.

This sequence belongs to the RNase HII family. The cofactor is Mn(2+). It depends on Mg(2+) as a cofactor.

The protein localises to the cytoplasm. It catalyses the reaction Endonucleolytic cleavage to 5'-phosphomonoester.. Functionally, endonuclease that specifically degrades the RNA of RNA-DNA hybrids. This chain is Ribonuclease HII, found in Actinobacillus succinogenes (strain ATCC 55618 / DSM 22257 / CCUG 43843 / 130Z).